The chain runs to 361 residues: MSAAFDPSSYATQLDAKVARLRELLAPFGAPEPAVFDSPREHYRLRAEFRLWREDGQRHYAMFAPGEKHKAILIDDFPIASERINALMPRLKAAWQASEELGNRLFQVEFLTTLAGDAMITMCYHRPLDEAWEVEARQLAEALGVSVIGRSKGKRLVIGRDYAVEKLDVAGRVFSYRQPEGAFTQPNGAVNQKMLSWAFEAMGDREDDLLELYCGNGNFTLPLATRVRQVLATEISKTSVNAALSNLDENAVDNVRLVRLSAEELTQALNEVRPFRRLEGIDLKSYQFGTVFVDPPRAGMDPDTCELTRRFERILYISCNPETLAANIAQLQDTHRIERCALFDQFPYTHHMESGVLLVRR.

S-adenosyl-L-methionine-binding residues include Gln-185, Tyr-213, Asn-218, Glu-234, and Asp-294. The Nucleophile role is filled by Cys-319. Glu-353 functions as the Proton acceptor in the catalytic mechanism.

Belongs to the class I-like SAM-binding methyltransferase superfamily. RNA M5U methyltransferase family. TrmA subfamily.

The enzyme catalyses uridine(54) in tRNA + S-adenosyl-L-methionine = 5-methyluridine(54) in tRNA + S-adenosyl-L-homocysteine + H(+). It carries out the reaction uridine(341) in tmRNA + S-adenosyl-L-methionine = 5-methyluridine(341) in tmRNA + S-adenosyl-L-homocysteine + H(+). Dual-specificity methyltransferase that catalyzes the formation of 5-methyluridine at position 54 (m5U54) in all tRNAs, and that of position 341 (m5U341) in tmRNA (transfer-mRNA). In Pseudomonas putida (strain ATCC 700007 / DSM 6899 / JCM 31910 / BCRC 17059 / LMG 24140 / F1), this protein is tRNA/tmRNA (uracil-C(5))-methyltransferase.